Here is a 500-residue protein sequence, read N- to C-terminus: MSSKNPVDEQPCCGSHEGSHQDPAPETLVVEKEVNNGEKKIRIAVVGCSHGEMDAIYETMTLIEQKNGYKFDLLICCGDYQAVRNYGDLPHMSIPPKYRSLQTFYKYYSGEQKAPVLTLFIGGNHEASGYLCELPNGGWVAPNIYYMGFANCIRFANLRIAGLSGIFSQGDFQFSHYERPSFSERDVKSAYHVRNVDMFRLRQLKSDNENKISNPIDIMLSHDWPGGIPDFGDKEWLFRKKDLFEADHNSGKLGNPSGMKLIYDCRPRYYLAAHLHIAFAALVPHKGSGSGRPQPTRFLSLDKPIPGRKFMQALELNVADDAKLELSYDPQWLAILRNTDLLTTGTKEQLILPDMASNRPCVYERKDFRPTAEELKEIEKLGDLTIRTDSFQQTAPPLKEITESSKNVPPSAYYRNPQSAEFCQWLGIRDLNQMLVEKTSEHVGTPYYMMTQDDANAKPNQDDVDFGDEDFVIDRGHTSDEPEAKKSRLDEDKFEAVPSE.

A disordered region spans residues 1-25; it reads MSSKNPVDEQPCCGSHEGSHQDPAP. A divalent metal cation contacts are provided by C48, H50, D79, and N124. The interval 164-194 is lariat recognition loop; that stretch reads SGIFSQGDFQFSHYERPSFSERDVKSAYHVR. A divalent metal cation-binding residues include H222, H274, and H276. The interval 453-500 is disordered; the sequence is DDANAKPNQDDVDFGDEDFVIDRGHTSDEPEAKKSRLDEDKFEAVPSE. Residues 462-471 show a composition bias toward acidic residues; the sequence is DDVDFGDEDF. The span at 472–500 shows a compositional bias: basic and acidic residues; that stretch reads VIDRGHTSDEPEAKKSRLDEDKFEAVPSE.

The protein belongs to the lariat debranching enzyme family. The cofactor is Fe(2+). Zn(2+) is required as a cofactor. Mn(2+) serves as cofactor.

It is found in the nucleus. Active in presence of diverse metals including Fe(2+), Zn(2+), Mn(2+). Binds two metal cations in two adjacent alpha and beta metal-binding pockets. Cleaves the 2'-5' phosphodiester linkage at the branch point of lariat intron pre-mRNAs after splicing and converts them into linear molecules that are subsequently degraded. It thereby facilitates ribonucleotide turnover. This chain is Lariat debranching enzyme, found in Caenorhabditis elegans.